The chain runs to 727 residues: Testis anion transporter 1 (727 aa).

At 1-23 (MLTIFPFLEWMCMYRLKDWLLGD) the chain is on the cytoplasmic side. The chain crosses the membrane as a helical span at residues 24–44 (LLAGISVGLVQVPQGLTLSLL). The Extracellular segment spans residues 45–47 (ARQ). The helical transmembrane segment at 48–68 (LIPPLNIAYAAFCSSVIYVIF) threads the bilayer. Over 69-74 (GSCHQM) the chain is Cytoplasmic. A helical membrane pass occupies residues 75–95 (SIGSFFLVSALLINVLKISPL). The Extracellular portion of the chain corresponds to 96-130 (NNGHLVMGSFLKDEFSAPSYLMGYNKSLSVVATTT). The N-linked (GlcNAc...) asparagine glycan is linked to N120. Residues 131–151 (FLTGIIQLIMGVLGLGFIATY) form a helical membrane-spanning segment. At 152-160 (LPESAMSAY) the chain is on the cytoplasmic side. The chain crosses the membrane as a helical span at residues 161 to 181 (LAAVALHIMLSQLTCIFGIMI). Residues 182–198 (SFHAGPISFFYDIINYC) are Extracellular-facing. The helical transmembrane segment at 199-219 (VALPKANSTSILLFLTVVVAL) threads the bilayer. The Cytoplasmic segment spans residues 220-235 (RINKCIRISFNQYPIE). The helical transmembrane segment at 236-256 (FPMELFLIIGFTVIGNKITMA) threads the bilayer. Residues 257-283 (TETSQTLIDMIPYSFLFPVTPDFSVLP) are Extracellular-facing. Residues 284–304 (KIILQAISLSLVSSFLLVFLG) form a helical membrane-spanning segment. The Cytoplasmic portion of the chain corresponds to 305 to 360 (KKIASLHNYSVNSNQDLIAIGLCNVVSSFFRSCVFTGAVARTIIQDKSGGRQQFAS). Residues 361-381 (LVGAGVMLLLMVKMGHFFYAL) traverse the membrane as a helical segment. Topologically, residues 382–383 (PN) are extracellular. The helical transmembrane segment at 384–404 (AVLAGIILSNVVPYLETISNL) threads the bilayer. Residues 405-424 (PSLWRQDQYDCALWMMTFSS) lie on the Cytoplasmic side of the membrane. Residues 425 to 445 (SIFLGLDIGLIISVVSAFFIT) traverse the membrane as a helical segment. Over 446 to 727 (SVRSHRAKIL…LPSFHLQHIF (282 aa)) the chain is Extracellular. Residues 471 to 722 (DYREIITIPG…NSLSRLPSFH (252 aa)) form the STAS domain. The segment at 592–727 (TVSSMSQKNQ…LPSFHLQHIF (136 aa)) is interaction with RACGAP1.

Belongs to the SLC26A/SulP transporter (TC 2.A.53) family. Interacts with RACGAP1. Interacts with CFTR; stimulates anion transport activity of CFTR. Post-translationally, N-glycosylated.

Its subcellular location is the membrane. The catalysed reaction is sulfate(out) + chloride(in) = sulfate(in) + chloride(out). It carries out the reaction oxalate(in) + chloride(out) = oxalate(out) + chloride(in). Functionally, antiporter that mediates the exchange of sulfate and oxalate against chloride ions across a membrane. Stimulates anion transport activity of CFTR. May cooperate with CFTR in the regulation of chloride and bicarbonate ions fluxes required for activation of the ADCY10/PKA pathway during sperm motility and sperm capacitation. May play a role in sperm tail differentiation and motility and hence male fertility. The polypeptide is Testis anion transporter 1 (Macaca fascicularis (Crab-eating macaque)).